Here is a 449-residue protein sequence, read N- to C-terminus: Tubulin beta-2 chain (449 aa).

GTP contacts are provided by Gln-11 and Glu-69. Residue Glu-69 coordinates Mg(2+). His-137 bears the Methylhistidine mark. Residues Ser-138, Gly-142, Thr-143, Gly-144, Asn-204, and Asn-226 each contribute to the GTP site.

It belongs to the tubulin family. In terms of assembly, dimer of alpha and beta chains. A typical microtubule is a hollow water-filled tube with an outer diameter of 25 nm and an inner diameter of 15 nM. Alpha-beta heterodimers associate head-to-tail to form protofilaments running lengthwise along the microtubule wall with the beta-tubulin subunit facing the microtubule plus end conferring a structural polarity. Microtubules usually have 13 protofilaments but different protofilament numbers can be found in some organisms and specialized cells. Mg(2+) serves as cofactor.

It localises to the cytoplasm. It is found in the cytoskeleton. In terms of biological role, tubulin is the major constituent of microtubules, a cylinder consisting of laterally associated linear protofilaments composed of alpha- and beta-tubulin heterodimers. Microtubules grow by the addition of GTP-tubulin dimers to the microtubule end, where a stabilizing cap forms. Below the cap, tubulin dimers are in GDP-bound state, owing to GTPase activity of alpha-tubulin. The protein is Tubulin beta-2 chain (tubC) of Emericella nidulans (strain FGSC A4 / ATCC 38163 / CBS 112.46 / NRRL 194 / M139) (Aspergillus nidulans).